The sequence spans 271 residues: MLATSDLWFRYQDEPVLKGLNLDFSLSPVTGLVGANGCGKSTLFMNLSGLLRPQKGAVLWQGKPLDYSKRGLLALRQQVATVFQDPEQQIFYTDIDSDIAFSLRNLGVPEAEITRRVDEALTLVDAQHFRHQPIQCLSHGQKKRVAIAGALVLQARYLLLDEPTAGLDPAGRTQMIAIIRRIVAQGNHVIISSHDIDLIYEISDAVYVLRQGQILMHGAPGEVFACTEAMEHAGLTQPWLVKLHTQLGLPLCKTETEFFHRMQKCAFREAS.

The region spanning 2–236 (LATSDLWFRY…TEAMEHAGLT (235 aa)) is the ABC transporter domain. 34–41 (GANGCGKS) is a binding site for ATP.

Belongs to the ABC transporter superfamily. Cobalt importer (TC 3.A.1.18.1) family. As to quaternary structure, forms an energy-coupling factor (ECF) transporter complex composed of an ATP-binding protein (A component, CbiO), a transmembrane protein (T component, CbiQ) and 2 possible substrate-capture proteins (S components, CbiM and CbiN) of unknown stoichimetry.

The protein localises to the cell inner membrane. It participates in cofactor biosynthesis; adenosylcobalamin biosynthesis. Functionally, part of the energy-coupling factor (ECF) transporter complex CbiMNOQ involved in cobalt import. Presumably responsible for energy coupling to the transport system. The polypeptide is Cobalt import ATP-binding protein CbiO (Salmonella typhi).